Here is a 474-residue protein sequence, read N- to C-terminus: ATP synthase subunit beta (474 aa).

Position 151-158 (151-158) interacts with ATP; it reads GGAGVGKT.

The protein belongs to the ATPase alpha/beta chains family. As to quaternary structure, F-type ATPases have 2 components, CF(1) - the catalytic core - and CF(0) - the membrane proton channel. CF(1) has five subunits: alpha(3), beta(3), gamma(1), delta(1), epsilon(1). CF(0) has four main subunits: a(1), b(1), b'(1) and c(9-12).

The protein localises to the cell inner membrane. The catalysed reaction is ATP + H2O + 4 H(+)(in) = ADP + phosphate + 5 H(+)(out). Produces ATP from ADP in the presence of a proton gradient across the membrane. The catalytic sites are hosted primarily by the beta subunits. The chain is ATP synthase subunit beta from Roseobacter denitrificans (strain ATCC 33942 / OCh 114) (Erythrobacter sp. (strain OCh 114)).